Reading from the N-terminus, the 244-residue chain is Homeobox-leucine zipper protein HOX14 (244 aa).

The disordered stretch occupies residues 25-64 (ASGEVQGERPRARRRRRRGARCVGGGGGGGEVDGGDPKKR). Residues 35–44 (RARRRRRRGA) are compositionally biased toward basic residues. Residues 46–56 (CVGGGGGGGEV) show a composition bias toward gly residues. A DNA-binding region (homeobox) is located at residues 59–118 (GDPKKRRLSDEQVEMLELSFREERKLETGRKVHLASELGLDPKQVAVWFQNRRARHKSKL). Residues 108–167 (QNRRARHKSKLLEEEFSKLKHAHDAAILHKCHLENEVLRLKERLVVAEEEVRRLRSAAGS) adopt a coiled-coil conformation.

Belongs to the HD-ZIP homeobox family. Class I subfamily. Expressed in roots, stems, leaf blades and panicles.

The protein resides in the nucleus. Functionally, probable transcription factor. The protein is Homeobox-leucine zipper protein HOX14 (HOX14) of Oryza sativa subsp. indica (Rice).